Here is a 256-residue protein sequence, read N- to C-terminus: Thiazole synthase (256 aa).

The Schiff-base intermediate with DXP role is filled by Lys95. Residues Gly156, 182 to 183, and 204 to 205 each bind 1-deoxy-D-xylulose 5-phosphate; these read AG and NT.

This sequence belongs to the ThiG family. Homotetramer. Forms heterodimers with either ThiH or ThiS.

The protein resides in the cytoplasm. The enzyme catalyses [ThiS sulfur-carrier protein]-C-terminal-Gly-aminoethanethioate + 2-iminoacetate + 1-deoxy-D-xylulose 5-phosphate = [ThiS sulfur-carrier protein]-C-terminal Gly-Gly + 2-[(2R,5Z)-2-carboxy-4-methylthiazol-5(2H)-ylidene]ethyl phosphate + 2 H2O + H(+). It functions in the pathway cofactor biosynthesis; thiamine diphosphate biosynthesis. Functionally, catalyzes the rearrangement of 1-deoxy-D-xylulose 5-phosphate (DXP) to produce the thiazole phosphate moiety of thiamine. Sulfur is provided by the thiocarboxylate moiety of the carrier protein ThiS. In vitro, sulfur can be provided by H(2)S. In Klebsiella pneumoniae (strain 342), this protein is Thiazole synthase.